We begin with the raw amino-acid sequence, 207 residues long: Outer-membrane lipoprotein LolB (207 aa).

Positions 1-26 are cleaved as a signal peptide; it reads MSKLKIDTKRRFSLLIALVLIISLSS. A lipid anchor (N-palmitoyl cysteine) is attached at cysteine 27. A lipid anchor (S-diacylglycerol cysteine) is attached at cysteine 27.

This sequence belongs to the LolB family. As to quaternary structure, monomer.

It is found in the cell outer membrane. Functionally, plays a critical role in the incorporation of lipoproteins in the outer membrane after they are released by the LolA protein. This Francisella tularensis subsp. tularensis (strain FSC 198) protein is Outer-membrane lipoprotein LolB.